Reading from the N-terminus, the 106-residue chain is Nucleoid-associated protein BBta_7345 (106 aa).

The protein belongs to the YbaB/EbfC family. As to quaternary structure, homodimer.

It localises to the cytoplasm. The protein localises to the nucleoid. In terms of biological role, binds to DNA and alters its conformation. May be involved in regulation of gene expression, nucleoid organization and DNA protection. The sequence is that of Nucleoid-associated protein BBta_7345 from Bradyrhizobium sp. (strain BTAi1 / ATCC BAA-1182).